The following is a 450-amino-acid chain: Phosphoglucosamine mutase (450 aa).

Residue Ser102 is the Phosphoserine intermediate of the active site. Mg(2+)-binding residues include Ser102, Asp242, Asp244, and Asp246. Ser102 bears the Phosphoserine mark.

This sequence belongs to the phosphohexose mutase family. It depends on Mg(2+) as a cofactor. Activated by phosphorylation.

It catalyses the reaction alpha-D-glucosamine 1-phosphate = D-glucosamine 6-phosphate. Catalyzes the conversion of glucosamine-6-phosphate to glucosamine-1-phosphate. The polypeptide is Phosphoglucosamine mutase (Lachnospira eligens (strain ATCC 27750 / DSM 3376 / VPI C15-48 / C15-B4) (Eubacterium eligens)).